A 254-amino-acid polypeptide reads, in one-letter code: 3-deoxy-manno-octulosonate cytidylyltransferase (254 aa).

This sequence belongs to the KdsB family.

The protein localises to the cytoplasm. It catalyses the reaction 3-deoxy-alpha-D-manno-oct-2-ulosonate + CTP = CMP-3-deoxy-beta-D-manno-octulosonate + diphosphate. Its pathway is nucleotide-sugar biosynthesis; CMP-3-deoxy-D-manno-octulosonate biosynthesis; CMP-3-deoxy-D-manno-octulosonate from 3-deoxy-D-manno-octulosonate and CTP: step 1/1. It functions in the pathway bacterial outer membrane biogenesis; lipopolysaccharide biosynthesis. Its function is as follows. Activates KDO (a required 8-carbon sugar) for incorporation into bacterial lipopolysaccharide in Gram-negative bacteria. The polypeptide is 3-deoxy-manno-octulosonate cytidylyltransferase (Chlamydia felis (strain Fe/C-56) (Chlamydophila felis)).